A 201-amino-acid polypeptide reads, in one-letter code: Probable nicotinate-nucleotide adenylyltransferase (201 aa).

The protein belongs to the NadD family.

The catalysed reaction is nicotinate beta-D-ribonucleotide + ATP + H(+) = deamido-NAD(+) + diphosphate. Its pathway is cofactor biosynthesis; NAD(+) biosynthesis; deamido-NAD(+) from nicotinate D-ribonucleotide: step 1/1. Functionally, catalyzes the reversible adenylation of nicotinate mononucleotide (NaMN) to nicotinic acid adenine dinucleotide (NaAD). The protein is Probable nicotinate-nucleotide adenylyltransferase of Clostridium botulinum (strain Kyoto / Type A2).